The following is a 384-amino-acid chain: Dual-specificity RNA methyltransferase RlmN (384 aa).

E105 serves as the catalytic Proton acceptor. In terms of domain architecture, Radical SAM core spans 111–350 (EDDRATLCVS…TIVRKTRGDD (240 aa)). Residues C118 and C355 are joined by a disulfide bond. The [4Fe-4S] cluster site is built by C125, C129, and C132. S-adenosyl-L-methionine-binding positions include 179–180 (GE), S211, 233–235 (SLH), and N312. C355 (S-methylcysteine intermediate) is an active-site residue.

Belongs to the radical SAM superfamily. RlmN family. [4Fe-4S] cluster is required as a cofactor.

Its subcellular location is the cytoplasm. The enzyme catalyses adenosine(2503) in 23S rRNA + 2 reduced [2Fe-2S]-[ferredoxin] + 2 S-adenosyl-L-methionine = 2-methyladenosine(2503) in 23S rRNA + 5'-deoxyadenosine + L-methionine + 2 oxidized [2Fe-2S]-[ferredoxin] + S-adenosyl-L-homocysteine. The catalysed reaction is adenosine(37) in tRNA + 2 reduced [2Fe-2S]-[ferredoxin] + 2 S-adenosyl-L-methionine = 2-methyladenosine(37) in tRNA + 5'-deoxyadenosine + L-methionine + 2 oxidized [2Fe-2S]-[ferredoxin] + S-adenosyl-L-homocysteine. Its function is as follows. Specifically methylates position 2 of adenine 2503 in 23S rRNA and position 2 of adenine 37 in tRNAs. m2A2503 modification seems to play a crucial role in the proofreading step occurring at the peptidyl transferase center and thus would serve to optimize ribosomal fidelity. The sequence is that of Dual-specificity RNA methyltransferase RlmN from Shigella flexneri serotype 5b (strain 8401).